The following is a 495-amino-acid chain: L-arabinose isomerase (495 aa).

Positions 305, 332, 349, and 448 each coordinate Mn(2+).

Belongs to the arabinose isomerase family. It depends on Mn(2+) as a cofactor.

The enzyme catalyses beta-L-arabinopyranose = L-ribulose. The protein operates within carbohydrate degradation; L-arabinose degradation via L-ribulose; D-xylulose 5-phosphate from L-arabinose (bacterial route): step 1/3. Its function is as follows. Catalyzes the conversion of L-arabinose to L-ribulose. The polypeptide is L-arabinose isomerase (Actinobacillus succinogenes (strain ATCC 55618 / DSM 22257 / CCUG 43843 / 130Z)).